We begin with the raw amino-acid sequence, 312 residues long: DNA-directed RNA polymerase subunit alpha (312 aa).

The alpha N-terminal domain (alpha-NTD) stretch occupies residues 1–229 (MLQYQIDRID…ELFQPLATVT (229 aa)). The tract at residues 246-312 (IPLEELNLSV…ISIPQSRTSV (67 aa)) is alpha C-terminal domain (alpha-CTD).

This sequence belongs to the RNA polymerase alpha chain family. In cyanobacteria the RNAP catalytic core is composed of 2 alpha, 1 beta, 1 beta', 1 gamma and 1 omega subunit. When a sigma factor is associated with the core the holoenzyme is formed, which can initiate transcription.

It catalyses the reaction RNA(n) + a ribonucleoside 5'-triphosphate = RNA(n+1) + diphosphate. Its function is as follows. DNA-dependent RNA polymerase catalyzes the transcription of DNA into RNA using the four ribonucleoside triphosphates as substrates. The chain is DNA-directed RNA polymerase subunit alpha from Prochlorococcus marinus subsp. pastoris (strain CCMP1986 / NIES-2087 / MED4).